We begin with the raw amino-acid sequence, 254 residues long: Protein GVQW3 (254 aa).

The sequence is that of Protein GVQW3 from Homo sapiens (Human).